The following is a 163-amino-acid chain: Lysosomal enzyme trafficking factor (163 aa).

2 helical membrane passes run 40–60 (MGWI…YYVF) and 98–118 (LPFW…FLFL).

Belongs to the LYSET family. As to quaternary structure, interacts with GNPTAB; this interaction is important for proper localization of GNPTAB in Golgi stacks. Interacts with MBTPS1.

The protein localises to the golgi apparatus membrane. Functionally, required for mannose-6-phosphate-dependent trafficking of lysosomal enzymes. LYSET bridges GlcNAc-1-phosphate transferase (GNPTAB), to the membrane-bound transcription factor site-1 protease (MBTPS1), thus allowing proteolytic activation of the GNPTAB. GNPTAB is involved in the regulation of M6P-dependent Golgi-to-lysosome trafficking of lysosomal enzymes. LYSET is thus an essential factor for maturation and delivery of lysosomal hydrolases. This Bos taurus (Bovine) protein is Lysosomal enzyme trafficking factor (LYSET).